The sequence spans 364 residues: DNA polymerase IV (364 aa).

Residues Ile-14 to Gly-198 enclose the UmuC domain. Mg(2+)-binding residues include Asp-18 and Asp-116. The active site involves Glu-117.

It belongs to the DNA polymerase type-Y family. Monomer. Requires Mg(2+) as cofactor.

The protein resides in the cytoplasm. The catalysed reaction is DNA(n) + a 2'-deoxyribonucleoside 5'-triphosphate = DNA(n+1) + diphosphate. In terms of biological role, poorly processive, error-prone DNA polymerase involved in untargeted mutagenesis. Copies undamaged DNA at stalled replication forks, which arise in vivo from mismatched or misaligned primer ends. These misaligned primers can be extended by PolIV. Exhibits no 3'-5' exonuclease (proofreading) activity. May be involved in translesional synthesis, in conjunction with the beta clamp from PolIII. The protein is DNA polymerase IV of Streptococcus pyogenes serotype M5 (strain Manfredo).